A 157-amino-acid polypeptide reads, in one-letter code: Ribosome-binding factor A (157 aa).

Positions 127-157 are disordered; that stretch reads QQQFGSEDASVEDEVLGDDVADDADETEGKD. Residues 135-157 are compositionally biased toward acidic residues; the sequence is ASVEDEVLGDDVADDADETEGKD.

It belongs to the RbfA family. In terms of assembly, monomer. Binds 30S ribosomal subunits, but not 50S ribosomal subunits or 70S ribosomes.

Its subcellular location is the cytoplasm. Functionally, one of several proteins that assist in the late maturation steps of the functional core of the 30S ribosomal subunit. Associates with free 30S ribosomal subunits (but not with 30S subunits that are part of 70S ribosomes or polysomes). Required for efficient processing of 16S rRNA. May interact with the 5'-terminal helix region of 16S rRNA. This Shewanella baltica (strain OS155 / ATCC BAA-1091) protein is Ribosome-binding factor A.